The chain runs to 389 residues: Tryptophan synthase beta chain 1 (389 aa).

An N6-(pyridoxal phosphate)lysine modification is found at Lys84.

The protein belongs to the TrpB family. Tetramer of two alpha and two beta chains. Pyridoxal 5'-phosphate serves as cofactor.

The protein localises to the plastid. It is found in the chloroplast. The catalysed reaction is (1S,2R)-1-C-(indol-3-yl)glycerol 3-phosphate + L-serine = D-glyceraldehyde 3-phosphate + L-tryptophan + H2O. It functions in the pathway amino-acid biosynthesis; L-tryptophan biosynthesis; L-tryptophan from chorismate: step 5/5. Its function is as follows. The beta subunit is responsible for the synthesis of L-tryptophan from indole and L-serine. The chain is Tryptophan synthase beta chain 1 (TSB1) from Zea mays (Maize).